Reading from the N-terminus, the 815-residue chain is uncharacterized protein (815 aa).

Residues 1–21 form the signal peptide; that stretch reads MNIYRLSFVSCLVMAMPCAMA. Cysteines 795 and 814 form a disulfide.

It belongs to the fimbrial export usher family.

It is found in the cell outer membrane. Functionally, could be involved in the export and assembly of the putative YbgD fimbrial subunit across the outer membrane. This is an uncharacterized protein from Escherichia coli (strain K12).